A 354-amino-acid chain; its full sequence is DNA replication and repair protein RecF (354 aa).

30 to 37 (GDNGSGKT) is a binding site for ATP.

Belongs to the RecF family.

The protein localises to the cytoplasm. In terms of biological role, the RecF protein is involved in DNA metabolism; it is required for DNA replication and normal SOS inducibility. RecF binds preferentially to single-stranded, linear DNA. It also seems to bind ATP. The protein is DNA replication and repair protein RecF of Idiomarina loihiensis (strain ATCC BAA-735 / DSM 15497 / L2-TR).